Consider the following 664-residue polypeptide: Lysophospholipase 1 (664 aa).

The first 22 residues, 1-22, serve as a signal peptide directing secretion; the sequence is MKLQSLLVSAAVLTSLTENVNA. Asparagine 26, asparagine 33, asparagine 52, asparagine 78, asparagine 92, asparagine 123, asparagine 160, asparagine 170, asparagine 215, asparagine 277, asparagine 307, asparagine 345, asparagine 388, asparagine 459, asparagine 489, asparagine 513, asparagine 541, asparagine 565, and asparagine 582 each carry an N-linked (GlcNAc...) asparagine glycan. One can recognise a PLA2c domain in the interval 35–586; that stretch reads TCDDDINLVR…TNYCWNGTID (552 aa). Asparagine 634 carries the GPI-anchor amidated asparagine lipid modification. Positions 635–664 are cleaved as a propeptide — removed in mature form; it reads AGNALVNYSNLNTNTFIGVLSVISAVFGLI.

Belongs to the lysophospholipase family.

It localises to the cell membrane. The catalysed reaction is a 1-acyl-sn-glycero-3-phosphocholine + H2O = sn-glycerol 3-phosphocholine + a fatty acid + H(+). It carries out the reaction a 1-acyl-sn-glycero-3-phospho-(1D-myo-inositol) + H2O = sn-glycero-3-phospho-1D-myo-inositol + a fatty acid + H(+). The enzyme catalyses a 1-acyl-sn-glycero-3-phospho-L-serine + H2O = sn-glycero-3-phospho-L-serine + a fatty acid + H(+). It catalyses the reaction a 1,2-diacyl-sn-glycero-3-phospho-(1D-myo-inositol) + 2 H2O = sn-glycero-3-phospho-1D-myo-inositol + 2 a carboxylate + 2 H(+). The catalysed reaction is a 1,2-diacyl-sn-glycero-3-phospho-L-serine + 2 H2O = sn-glycero-3-phospho-L-serine + 2 a carboxylate + 2 H(+). It carries out the reaction 2 1-hexadecanoyl-sn-glycero-3-phosphocholine = 1,2-dihexadecanoyl-sn-glycero-3-phosphocholine + sn-glycerol 3-phosphocholine. The enzyme catalyses 1-hexadecanoyl-sn-glycero-3-phosphocholine + H2O = sn-glycerol 3-phosphocholine + hexadecanoate + H(+). It catalyses the reaction 1,2-dihexadecanoyl-sn-glycero-3-phosphocholine + H2O = 1-hexadecanoyl-sn-glycero-3-phosphocholine + hexadecanoate + H(+). Functionally, sequentially removes both fatty acyl groups from diacylglycerophospholipids and therefore has both phospholipase B and lysophospholipase activities. It also displays transacylase activity. Substrate preference is phosphatidylserine &gt; phosphatidylinositol &gt;&gt; phosphatidylcholine &gt; phosphatidylethanolamine. The substrate specificity is pH- and ion-dependent. In contrast with activities observed at optimum pH 3.5, the order of substrate preference at pH 5.5 is phosphatidylcholine = phosphatidylethanolamine &gt;&gt; phosphatidylinositol. Degrades predominantly phosphatidylcholine and to some extent phosphatidylinositol in vivo. The chain is Lysophospholipase 1 from Saccharomyces cerevisiae (strain ATCC 204508 / S288c) (Baker's yeast).